The following is a 95-amino-acid chain: Large ribosomal subunit protein uL23 (95 aa).

Belongs to the universal ribosomal protein uL23 family. As to quaternary structure, part of the 50S ribosomal subunit. Contacts protein L29 and trigger factor when it is bound to the ribosome.

In terms of biological role, one of the early assembly protein it binds 23S rRNA. One of the proteins that surrounds the polypeptide exit tunnel on the outside of the subunit. Forms the main docking site for trigger factor binding to the ribosome. The sequence is that of Large ribosomal subunit protein uL23 from Deinococcus radiodurans (strain ATCC 13939 / DSM 20539 / JCM 16871 / CCUG 27074 / LMG 4051 / NBRC 15346 / NCIMB 9279 / VKM B-1422 / R1).